The chain runs to 86 residues: Small ribosomal subunit protein bS20 (86 aa).

It belongs to the bacterial ribosomal protein bS20 family.

Its function is as follows. Binds directly to 16S ribosomal RNA. This chain is Small ribosomal subunit protein bS20, found in Mycolicibacterium gilvum (strain PYR-GCK) (Mycobacterium gilvum (strain PYR-GCK)).